Reading from the N-terminus, the 20-residue chain is Toxin CpTx-4a (20 aa).

The protein belongs to the spider toxin CSTX family. As to expression, expressed by the venom gland.

Its subcellular location is the secreted. Spider venom toxin that exhibits cytolytic activity by forming an alpha-helix across the membrane. Lethal to insect larvae. The polypeptide is Toxin CpTx-4a (Cheiracanthium punctorium (Yellow sac spider)).